The sequence spans 48 residues: ATP synthase protein 8 (48 aa).

A helical membrane pass occupies residues 4–24 (LVPFYFINILSFGFLIFTVLL).

Belongs to the ATPase protein 8 family. In terms of assembly, F-type ATPases have 2 components, CF(1) - the catalytic core - and CF(0) - the membrane proton channel.

The protein resides in the mitochondrion membrane. In terms of biological role, mitochondrial membrane ATP synthase (F(1)F(0) ATP synthase or Complex V) produces ATP from ADP in the presence of a proton gradient across the membrane which is generated by electron transport complexes of the respiratory chain. F-type ATPases consist of two structural domains, F(1) - containing the extramembraneous catalytic core and F(0) - containing the membrane proton channel, linked together by a central stalk and a peripheral stalk. During catalysis, ATP synthesis in the catalytic domain of F(1) is coupled via a rotary mechanism of the central stalk subunits to proton translocation. Part of the complex F(0) domain. Minor subunit located with subunit a in the membrane. The polypeptide is ATP synthase protein 8 (atp8) (Schizosaccharomyces pombe (strain 972 / ATCC 24843) (Fission yeast)).